Reading from the N-terminus, the 644-residue chain is L-aspartate oxidase 2-a, chloroplastic (644 aa).

FAD contacts are provided by residues Ser-94–Ala-97, Lys-116, Asn-123–Gly-130, and Asp-294. Arg-369 functions as the Proton donor/acceptor in the catalytic mechanism. Residues Glu-454 and Ser-470–Leu-471 contribute to the FAD site.

The protein belongs to the FAD-dependent oxidoreductase 2 family. NadB subfamily. It depends on FAD as a cofactor.

The protein localises to the plastid. Its subcellular location is the chloroplast. The enzyme catalyses L-aspartate + O2 = iminosuccinate + H2O2. The protein operates within alkaloid biosynthesis; nicotine biosynthesis. Its pathway is cofactor biosynthesis; NAD(+) biosynthesis; iminoaspartate from L-aspartate (oxidase route): step 1/1. Involved in the biosynthesis of pyridine alkaloid natural products, leading mainly to the production of anabasine, anatabine, nicotine and nornicotine, effective deterrents against herbivores with antiparasitic and pesticide properties (neurotoxins); nornicotine serves as the precursor in the synthesis of the carcinogen compound N'-nitrosonornicotine (NNN). Catalyzes the oxidation of L-aspartate to iminoaspartate. In Nicotiana tabacum (Common tobacco), this protein is L-aspartate oxidase 2-a, chloroplastic.